Here is a 370-residue protein sequence, read N- to C-terminus: Putrescine-binding periplasmic protein PotF (370 aa).

Residues methionine 1–alanine 26 form the signal peptide. Serine 38 serves as a coordination point for putrescine. The cysteines at positions 175 and 239 are disulfide-linked. Residues aspartate 247 and aspartate 278 each coordinate putrescine.

The protein belongs to the bacterial solute-binding protein PotD/PotF family. The complex is composed of two ATP-binding proteins (PotG), two transmembrane proteins (PotH and PotI) and a solute-binding protein (PotF).

It is found in the periplasm. Its activity is regulated as follows. Transport is feedback inhibited by intracellular polyamines. Functionally, part of the ABC transporter complex PotFGHI involved in putrescine uptake. Binds putrescine. Imports putrescine for maintenance of the optimal concentration of polyamines necessary for cell growth in the presence of glucose. The polypeptide is Putrescine-binding periplasmic protein PotF (Escherichia coli (strain K12)).